An 83-amino-acid polypeptide reads, in one-letter code: Bublin coiled-coil protein (83 aa).

The tract at residues 1–24 (MSGPNGDLGMPVEAGAEGEEDGFG) is disordered. Residues 25 to 74 (EAEYAAINSMLDQINSCLDHLEEKNDHLHARLQELLESNRQTRLEFQQQL) are a coiled coil. Serine 82 carries the post-translational modification Phosphoserine.

Belongs to the UPF0184 (EST00098) family.

The protein resides in the cell junction. It localises to the cytoplasm. It is found in the cytoskeleton. Its function is as follows. Essential for intermediate filament organization in intestinal cells, interacts with intermediate filament and regulates intestinal lumen morphology. The chain is Bublin coiled-coil protein from Homo sapiens (Human).